Reading from the N-terminus, the 967-residue chain is Leucine--tRNA ligase (967 aa).

The short motif at 43 to 53 (PYLSGHLHVGH) is the 'HIGH' region element. Residues 650–654 (KMSKS) carry the 'KMSKS' region motif. Lysine 653 lines the ATP pocket.

The protein belongs to the class-I aminoacyl-tRNA synthetase family.

Its subcellular location is the cytoplasm. It carries out the reaction tRNA(Leu) + L-leucine + ATP = L-leucyl-tRNA(Leu) + AMP + diphosphate. This Thermococcus onnurineus (strain NA1) protein is Leucine--tRNA ligase.